A 500-amino-acid polypeptide reads, in one-letter code: Intermediate filament protein ifc-1 (500 aa).

Positions 1–36 (MSLYGGIPTNLVSGMSSAGAICTTQIRDAREREKRE) are head. The region spanning 33–383 (EKREIGLLND…VLLNGANVTT (351 aa)) is the IF rod domain. The tract at residues 37-68 (IGLLNDRLADYIEKVRFLKAQNHVLSHDIEIL) is coil 1A. The tract at residues 69–81 (RRGFSGGGHISSF) is linker 1. The tract at residues 82 to 219 (FESEISNCTV…TENSSRIEQE (138 aa)) is coil 1B. The segment at 220 to 237 (LIYIHRDTTLENRDYFRQ) is linker 12. The segment at 238–383 (ELQAAMRDIR…VLLNGANVTT (146 aa)) is coil 2. A tail region spans residues 384–496 (YVSNSTGAAG…RHHESSYSYS (113 aa)).

Belongs to the intermediate filament family.

It localises to the cytoplasm. Functionally, cytoplasmic intermediate filaments provide mechanical strength to cells. Not essential protein. This is Intermediate filament protein ifc-1 (ifc-1) from Caenorhabditis elegans.